An 89-amino-acid polypeptide reads, in one-letter code: LYR motif-containing protein 4 (89 aa).

Belongs to the complex I LYR family.

Its subcellular location is the mitochondrion. The protein resides in the nucleus. It functions in the pathway cofactor biosynthesis; iron-sulfur cluster biosynthesis. Functionally, required for nuclear and mitochondrial iron-sulfur protein biosynthesis. This is LYR motif-containing protein 4 (lyrm4) from Danio rerio (Zebrafish).